An 862-amino-acid chain; its full sequence is Alpha,alpha-trehalose-phosphate synthase [UDP-forming] 5 (862 aa).

Position 5 is a phosphoserine (S5). T32 is subject to Phosphothreonine. The segment at 60 to 546 (DRIIIVGNQL…ARSFIQDLER (487 aa)) is glycosyltransferase.

This sequence in the N-terminal section; belongs to the glycosyltransferase 20 family. In the C-terminal section; belongs to the trehalose phosphatase family. Binds to the phosphopeptide-binding site of GRF/14-3-3 and to MBF1c. Post-translationally, both Ser-5 and Thr-32 must be phosphorylated for binding to GRF/14-3-3. Low expression in leaves, stems, flower buds, flowers and siliques.

It carries out the reaction D-glucose 6-phosphate + UDP-alpha-D-glucose = alpha,alpha-trehalose 6-phosphate + UDP + H(+). In Arabidopsis thaliana (Mouse-ear cress), this protein is Alpha,alpha-trehalose-phosphate synthase [UDP-forming] 5 (TPS5).